The following is a 365-amino-acid chain: Phenoloxidase-activating factor 1 (365 aa).

An N-terminal signal peptide occupies residues 1-23; that stretch reads MKQVHFFILWFFVLNLYSIKAQA. Positions 24-74 constitute a Clip domain; it reads GCRTPNGENARCVPINNCKILYDSVLTSDPEVIRFLRASQCGYNGQPLVCC. Cystine bridges form between Cys25–Cys73, Cys35–Cys64, Cys41–Cys74, Cys101–Cys240, Cys140–Cys156, Cys184–Cys191, Cys284–Cys301, and Cys311–Cys340. Positions 110–364 constitute a Peptidase S1 domain; it reads ILNGDDTVPE…YRDWIEGNIR (255 aa). N-linked (GlcNAc...) asparagine glycosylation is present at Asn131. The active-site Charge relay system is the His155. Ca(2+) contacts are provided by Glu175, Asn177, Thr180, and Asp183. Residue Asp220 is the Charge relay system of the active site. The active-site Charge relay system is the Ser315.

This sequence belongs to the peptidase S1 family. CLIP subfamily. As to quaternary structure, in the active form, heterodimer of a light chain and a heavy chain; disulfide-linked. Post-translationally, cleaved following the recognition of pathogen-derived products, probably by a lysyl endopeptidase.

It localises to the secreted. Its activity is regulated as follows. Protein stability and endopeptidase activity are calcium dependent. First cleavage on prophenoloxidase PPO1 and PPO2 is not dependent on calcium; however, cleavage of PPO1 and PPO2 to their active forms is dependent on calcium and on the presence of PPAF2 and PPAF3. Cleavage of PPAF2 is inhibited by calcium. Inhibited by ethylenediaminetetraacetic acid (EDTA), p-nitrophenyl-p'-guanido-benzoate, diisopropylphosphorofluoridate (iPr2PF) and p-(Amidinophenyl)methanesulfonyl fluoride (p-APMSF). Serine endopeptidase which, by cleaving prophenoloxidase PPO1 and PPO2, is required for the activation of the prophenoloxidase cascade probably following the recognition of pathogen-derived products. The polypeptide is Phenoloxidase-activating factor 1 (Holotrichia diomphalia (Korean black chafer)).